Reading from the N-terminus, the 519-residue chain is Chromobox protein homolog 2 (519 aa).

In terms of domain architecture, Chromo spans 12–70 (FAAECILSKRLRKGKLEYLVKWRGWSSKHNSWEPEENILDPRLLLAFQKKEHEKEVQNR). Basic and acidic residues predominate over residues 60–69 (KKEHEKEVQN). Residues 60–180 (KKEHEKEVQN…PPEQKAARRP (121 aa)) are disordered. Over residues 70–84 (RKRGKRPRGRPRKHT) the composition is skewed to basic residues. Positions 75-87 (RPRGRPRKHTVTS) form a DNA-binding region, a.T hook. Over residues 103-119 (KSKSSSSSSSSTSSSSS) the composition is skewed to low complexity. Residues 129-141 (LDSKRGPRGRETH) show a composition bias toward basic and acidic residues. Residues Lys-147 and Lys-154 each participate in a glycyl lysine isopeptide (Lys-Gly) (interchain with G-Cter in SUMO2) cross-link. The Nuclear localization signal motif lies at 164 to 169 (KRGRKP). Asymmetric dimethylarginine; alternate is present on Arg-248. At Arg-248 the chain carries Omega-N-methylarginine; alternate. Disordered stretches follow at residues 295-336 (QKGG…LAPT) and 367-464 (AIPA…TSLP). Position 303 is a phosphoserine (Ser-303). 2 stretches are compositionally biased toward polar residues: residues 321–336 (QRGN…LAPT) and 384–395 (TGANMTNAPTDN). Residues 453–464 (SSDSDPDSTSLP) are compositionally biased toward low complexity.

As to quaternary structure, component of a PRC1-like complex. The composition of the PRC1 complex may differ between the PRC1 complex in pluripotent embryonic stem cells containing RNF2, CBX7 and PCGF2, and the PRC1 complex in differentiating cells containing RNF2, CBX2, CBX4 and BMI1. Interacts with RING1/RNF2. Interacts (via chromodomain) with histone H3K9Me3 and H3K27me3. May interact with H3C15 and H3C1. In terms of tissue distribution, expressed in embryoid bodies.

Its subcellular location is the nucleus speckle. It is found in the chromosome. In terms of biological role, component of a Polycomb group (PcG) multiprotein PRC1-like complex, a complex class required to maintain the transcriptionally repressive state of many genes, including Hox genes, throughout development. PcG PRC1 complex acts via chromatin remodeling and modification of histones; it mediates monoubiquitination of histone H2A 'Lys-119', rendering chromatin heritably changed in its expressibility. Binds to histone H3 trimethylated at 'Lys-9' (H3K9me3) or at 'Lys-27' (H3K27me3). Plays a role in the lineage differentiation of the germ layers in embryonic development. Involved in sexual development, acting as activator of NR5A1 expression. This Mus musculus (Mouse) protein is Chromobox protein homolog 2 (Cbx2).